Consider the following 120-residue polypeptide: Putative 15 kDa capsid protein (120 aa).

The protein resides in the virion. This is Putative 15 kDa capsid protein (P15) from Orgyia pseudotsugata (Douglas-fir tussock moth).